We begin with the raw amino-acid sequence, 414 residues long: Glucose-1-phosphate adenylyltransferase (414 aa).

Residues Y103, G168, 183–184, and S201 each bind alpha-D-glucose 1-phosphate; that span reads EK.

The protein belongs to the bacterial/plant glucose-1-phosphate adenylyltransferase family. As to quaternary structure, homotetramer.

It catalyses the reaction alpha-D-glucose 1-phosphate + ATP + H(+) = ADP-alpha-D-glucose + diphosphate. Its pathway is glycan biosynthesis; glycogen biosynthesis. Involved in the biosynthesis of ADP-glucose, a building block required for the elongation reactions to produce glycogen. Catalyzes the reaction between ATP and alpha-D-glucose 1-phosphate (G1P) to produce pyrophosphate and ADP-Glc. This Thermus caldophilus protein is Glucose-1-phosphate adenylyltransferase.